A 417-amino-acid chain; its full sequence is Peptidyl-Asp metalloendopeptidase (417 aa).

The N-terminal stretch at methionine 1–alanine 25 is a signal peptide. Histidine 327 contacts Zn(2+). Glutamate 328 is a catalytic residue. 2 residues coordinate Zn(2+): histidine 331 and histidine 337.

It belongs to the peptidase M72 family. It depends on Zn(2+) as a cofactor.

It carries out the reaction Cleavage of Xaa-|-Asp, Xaa-|-Glu and Xaa-|-cysteic acid bonds.. Metalloprotease, specifically cleaves on the N-terminal side of aspartyl, glutamyl and cysteic acid residues. The sequence is that of Peptidyl-Asp metalloendopeptidase from Stenotrophomonas maltophilia (strain R551-3).